Consider the following 134-residue polypeptide: Holo-[acyl-carrier-protein] synthase (134 aa).

Mg(2+) is bound by residues Asp-8 and Glu-57.

This sequence belongs to the P-Pant transferase superfamily. AcpS family. The cofactor is Mg(2+).

It is found in the cytoplasm. It catalyses the reaction apo-[ACP] + CoA = holo-[ACP] + adenosine 3',5'-bisphosphate + H(+). Functionally, transfers the 4'-phosphopantetheine moiety from coenzyme A to a Ser of acyl-carrier-protein. In Roseobacter denitrificans (strain ATCC 33942 / OCh 114) (Erythrobacter sp. (strain OCh 114)), this protein is Holo-[acyl-carrier-protein] synthase.